Reading from the N-terminus, the 912-residue chain is Protein translocase subunit SecA (912 aa).

Residues glutamine 87, glycine 105–threonine 109, and aspartate 508 each bind ATP. Positions aspartate 865–serine 912 are disordered. Zn(2+) is bound by residues cysteine 896, cysteine 898, cysteine 907, and histidine 908. Residues lysine 902 to serine 912 show a composition bias toward basic residues.

It belongs to the SecA family. In terms of assembly, monomer and homodimer. Part of the essential Sec protein translocation apparatus which comprises SecA, SecYEG and auxiliary proteins SecDF-YajC and YidC. Zn(2+) is required as a cofactor.

The protein resides in the cell inner membrane. Its subcellular location is the cytoplasm. It catalyses the reaction ATP + H2O + cellular proteinSide 1 = ADP + phosphate + cellular proteinSide 2.. Functionally, part of the Sec protein translocase complex. Interacts with the SecYEG preprotein conducting channel. Has a central role in coupling the hydrolysis of ATP to the transfer of proteins into and across the cell membrane, serving both as a receptor for the preprotein-SecB complex and as an ATP-driven molecular motor driving the stepwise translocation of polypeptide chains across the membrane. The protein is Protein translocase subunit SecA of Xanthomonas oryzae pv. oryzae (strain MAFF 311018).